The primary structure comprises 517 residues: Cobyric acid synthase (517 aa).

The GATase cobBQ-type domain maps to 253–453 (EVEIAVIKLP…IHGILDNDSL (201 aa)). Cys-334 serves as the catalytic Nucleophile. The active site involves His-445.

The protein belongs to the CobB/CobQ family. CobQ subfamily.

The protein operates within cofactor biosynthesis; adenosylcobalamin biosynthesis. In terms of biological role, catalyzes amidations at positions B, D, E, and G on adenosylcobyrinic A,C-diamide. NH(2) groups are provided by glutamine, and one molecule of ATP is hydrogenolyzed for each amidation. This is Cobyric acid synthase from Moorella thermoacetica (strain ATCC 39073 / JCM 9320).